A 101-amino-acid polypeptide reads, in one-letter code: Iron-sulfur cluster assembly protein CyaY (101 aa).

The protein belongs to the frataxin family.

Involved in iron-sulfur (Fe-S) cluster assembly. May act as a regulator of Fe-S biogenesis. In Haemophilus influenzae (strain PittEE), this protein is Iron-sulfur cluster assembly protein CyaY.